Reading from the N-terminus, the 240-residue chain is Zinc finger CCCH domain-containing protein 52 (240 aa).

Disordered regions lie at residues 1 to 37 (MDARKRGRPEAAASHNSNGGFKRSKQEMESISTGLGS) and 81 to 106 (SQVSRNMQGSGGPGGRFSGRGDPGSG). The C3H1-type 1 zinc-finger motif lies at 36 to 64 (GSKSKPCTKFFSTSGCPFGDNCHFLHYVP). Over residues 89-104 (GSGGPGGRFSGRGDPG) the composition is skewed to gly residues. The KH domain occupies 113 to 177 (ASTSKISVDA…EQINVASGMV (65 aa)). A C3H1-type 2 zinc finger spans residues 205-232 (NYKTKICDRYSKGNCTYGDRCHFAHGES).

The protein is Zinc finger CCCH domain-containing protein 52 of Arabidopsis thaliana (Mouse-ear cress).